Consider the following 164-residue polypeptide: Peroxynitrite isomerase 2 (164 aa).

The GXWXGXG motif lies at 17 to 23 (GSWAGRG). Histidine 155 is a binding site for heme b.

This sequence belongs to the nitrobindin family. Homodimer. It depends on heme b as a cofactor.

It catalyses the reaction peroxynitrite = nitrate. It functions in the pathway nitrogen metabolism. In terms of biological role, heme-binding protein able to scavenge peroxynitrite and to protect free L-tyrosine against peroxynitrite-mediated nitration, by acting as a peroxynitrite isomerase that converts peroxynitrite to nitrate. Therefore, this protein likely plays a role in peroxynitrite sensing and in the detoxification of reactive nitrogen and oxygen species (RNS and ROS, respectively). Is able to bind nitric oxide (NO) in vitro, but may act as a sensor of peroxynitrite levels in vivo. In Mycobacterium bovis (strain BCG / Pasteur 1173P2), this protein is Peroxynitrite isomerase 2.